The primary structure comprises 168 residues: Peptide deformylase (168 aa).

The Fe cation site is built by cysteine 92 and histidine 134. Glutamate 135 is an active-site residue. A Fe cation-binding site is contributed by histidine 138.

Belongs to the polypeptide deformylase family. The cofactor is Fe(2+).

The catalysed reaction is N-terminal N-formyl-L-methionyl-[peptide] + H2O = N-terminal L-methionyl-[peptide] + formate. Removes the formyl group from the N-terminal Met of newly synthesized proteins. Requires at least a dipeptide for an efficient rate of reaction. N-terminal L-methionine is a prerequisite for activity but the enzyme has broad specificity at other positions. The polypeptide is Peptide deformylase (Stutzerimonas stutzeri (strain A1501) (Pseudomonas stutzeri)).